The chain runs to 201 residues: Large ribosomal subunit protein uL4 (201 aa).

The tract at residues Glu-51 to Val-73 is disordered.

This sequence belongs to the universal ribosomal protein uL4 family. In terms of assembly, part of the 50S ribosomal subunit.

Its function is as follows. One of the primary rRNA binding proteins, this protein initially binds near the 5'-end of the 23S rRNA. It is important during the early stages of 50S assembly. It makes multiple contacts with different domains of the 23S rRNA in the assembled 50S subunit and ribosome. Functionally, forms part of the polypeptide exit tunnel. The chain is Large ribosomal subunit protein uL4 from Erwinia tasmaniensis (strain DSM 17950 / CFBP 7177 / CIP 109463 / NCPPB 4357 / Et1/99).